The chain runs to 734 residues: MASRFPKFSQGLSQDPTTRRIWFGIATAHDFESHDGITEEKLYQKIFASHFGQLAVIFLWTSGNLFHVAWQGNFEAWSQDPLHVRPIAHAIWDPHFGQPAVEAFTRGGASGPVNISYSGVYQWWYTQGIRTNLELYQGALFLLGLAAVSLAAGWLHLQPKWQPKISWFKNAESRLNHHLSGLFGVSSLAWSGHLVHVAIPESRGQHVGWDNLLTTLPHPAGLAPFFSGQWSVYSQNPDSASHLFSTSQGSGTAILTFLGGFHPQTQSLWLTDIAHHHLAIAVLFIIAGHQYRTNFGIGHSIREILESHVPPGGGLGQGHKGLYDTLNNSLHFQLGLALASLGVITSLVAQHMYSLPSYAFIAQDFTTQAALYTHHQYIAGFIMSGAFAHGAIFFIRDYNPEQNKGNVLARMLEHKEAIISHLSWASLFLGFHTLGLYVHNDVVQAFGNPEKQILIEPVFAQWIQSSHGKTLYGFDVFLSSTASPAFYAGQSLWLPGWLDSINSNTNSLFLTIGPGDFLVHHAIALGLHTTTLILVKGALDARGSKLMPDKKEFGYSFPCDGPGRGGTCDISAWDAFYLAIFWMLNTIGWVTFYWHWKHLALWQGNAAQFNESSTYLMGWLRDYLWLNSSQLINGYNPFGMNSLSVWAWMFLFGHLIWATGFMFLISWRGYWQELIETLAWAHERTPLANLVRWKDKPVALSIVQARLVGLAHFSVGYIFTYAAFLIASTSGKFG.

Helical transmembrane passes span 46–69 (IFAS…FHVA), 135–158 (LYQG…LHLQ), 175–199 (LNHH…HVAI), 273–291 (IAHH…GHQY), 330–353 (LHFQ…QHMY), 369–395 (AALY…IFFI), 417–439 (AIIS…LYVH), and 517–535 (FLVH…LILV). The [4Fe-4S] cluster site is built by Cys-559 and Cys-568. Helical transmembrane passes span 575–596 (AFYL…YWHW) and 643–665 (LSVW…MFLI). The chlorophyll a site is built by His-654, Met-662, and Tyr-670. A phylloquinone-binding site is contributed by Trp-671. A helical membrane pass occupies residues 707 to 727 (LVGLAHFSVGYIFTYAAFLIA).

It belongs to the PsaA/PsaB family. As to quaternary structure, the PsaA/B heterodimer binds the P700 chlorophyll special pair and subsequent electron acceptors. PSI consists of a core antenna complex that captures photons, and an electron transfer chain that converts photonic excitation into a charge separation. The eukaryotic PSI reaction center is composed of at least 11 subunits. The cofactor is P700 is a chlorophyll a/chlorophyll a' dimer, A0 is one or more chlorophyll a, A1 is one or both phylloquinones and FX is a shared 4Fe-4S iron-sulfur center..

Its subcellular location is the plastid. It is found in the chloroplast thylakoid membrane. The catalysed reaction is reduced [plastocyanin] + hnu + oxidized [2Fe-2S]-[ferredoxin] = oxidized [plastocyanin] + reduced [2Fe-2S]-[ferredoxin]. In terms of biological role, psaA and PsaB bind P700, the primary electron donor of photosystem I (PSI), as well as the electron acceptors A0, A1 and FX. PSI is a plastocyanin-ferredoxin oxidoreductase, converting photonic excitation into a charge separation, which transfers an electron from the donor P700 chlorophyll pair to the spectroscopically characterized acceptors A0, A1, FX, FA and FB in turn. Oxidized P700 is reduced on the lumenal side of the thylakoid membrane by plastocyanin. This Chaetosphaeridium globosum (Charophycean green alga) protein is Photosystem I P700 chlorophyll a apoprotein A2.